Consider the following 160-residue polypeptide: MVAQIRIGQGMDVHAFEEGNFVTLAGVQIPHTHGLKAHSDGDVVLHALCDALLGALALGDIGQHFPDTDPEFKGADSRVLLKHVYQLILDRGYHLNNADITVACERPKLAKYNLEMRQSIADVLNVDLNQISIKATTTEKLGFTGRQEGILATATVLISH.

A divalent metal cation contacts are provided by aspartate 12 and histidine 14. 4-CDP-2-C-methyl-D-erythritol 2-phosphate contacts are provided by residues 12 to 14 (DVH) and 38 to 39 (HS). A divalent metal cation is bound at residue histidine 46. 4-CDP-2-C-methyl-D-erythritol 2-phosphate contacts are provided by residues 60 to 62 (DIG), 65 to 69 (FPDTD), 136 to 139 (TTTE), phenylalanine 143, and arginine 146.

This sequence belongs to the IspF family. Homotrimer. A divalent metal cation serves as cofactor.

It carries out the reaction 4-CDP-2-C-methyl-D-erythritol 2-phosphate = 2-C-methyl-D-erythritol 2,4-cyclic diphosphate + CMP. The protein operates within isoprenoid biosynthesis; isopentenyl diphosphate biosynthesis via DXP pathway; isopentenyl diphosphate from 1-deoxy-D-xylulose 5-phosphate: step 4/6. Functionally, involved in the biosynthesis of isopentenyl diphosphate (IPP) and dimethylallyl diphosphate (DMAPP), two major building blocks of isoprenoid compounds. Catalyzes the conversion of 4-diphosphocytidyl-2-C-methyl-D-erythritol 2-phosphate (CDP-ME2P) to 2-C-methyl-D-erythritol 2,4-cyclodiphosphate (ME-CPP) with a corresponding release of cytidine 5-monophosphate (CMP). The protein is 2-C-methyl-D-erythritol 2,4-cyclodiphosphate synthase of Acinetobacter baumannii (strain AB307-0294).